The chain runs to 110 residues: uncharacterized protein (110 aa).

Transmembrane regions (helical) follow at residues Ile21–Cys41 and Pro63–Val83.

It localises to the membrane. This is an uncharacterized protein from Saccharomyces cerevisiae (strain ATCC 204508 / S288c) (Baker's yeast).